The sequence spans 468 residues: Protein translocase subunit SecY (468 aa).

The Cytoplasmic portion of the chain corresponds to 1 to 20 (MGARDVIYAMEKWFPEVERP). The helical transmembrane segment at 21 to 47 (KKHVPLKEKFVWTGLALVLYYVLAEIP) threads the bilayer. The Extracellular portion of the chain corresponds to 48–58 (VYGIPKKIQDY). Positions 59–66 (FQFLRVVL) form an intramembrane region, helical. The discontinuously helical transmembrane segment at 59 to 87 (FQFLRVVLAGRNGSILTLGIGPIVTAGII) threads the bilayer. Residues 67–78 (AGRNGSILTLGI) lie within the membrane without spanning it. The segment at residues 79-87 (GPIVTAGII) is an intramembrane region (helical). Over 88 to 108 (LQLLVGSELIRLDLANPEDRR) the chain is Cytoplasmic. A helical membrane pass occupies residues 109-133 (FYQALQRVFSVFMCFFEAAIWVLGG). Topologically, residues 134–144 (AFGRVGVDVTY) are extracellular. The helical transmembrane segment at 145 to 169 (TIATLMIIQLALGGIILIVLDELVS) threads the bilayer. Residues 170–175 (KWGIGS) lie on the Cytoplasmic side of the membrane. Residues 176-194 (GISLFIAAGVSQRILTRSL) traverse the membrane as a helical segment. Over 195–239 (NPLTDPNIIDPLTGKPAIVGAIPYFIQHILDGDLKGALYRGGSAP) the chain is Extracellular. The helical transmembrane segment at 240-261 (DMIAVTATIIVFLVVVYFESMR) threads the bilayer. The Cytoplasmic portion of the chain corresponds to 262–285 (VEIPLGYRGVTIRGRYPIKFLYVS). A helical membrane pass occupies residues 286-307 (NIPIILTFALYANIQLWARVLD). The Extracellular portion of the chain corresponds to 308–346 (RFGHPWLGRFDPVTGNPIGGFVLYVIPPRNIFTVIDNPV). The chain crosses the membrane as a helical span at residues 347-366 (RAIIYLILTIIFSLLFGFLW). The Cytoplasmic portion of the chain corresponds to 367–409 (VELTGLDARTIARQLQRAGLQIPGFRRDPRTLERVLQKYIPYV). A helical transmembrane segment spans residues 410-428 (TFWGSLTVALISVLADFLG). At 429–431 (ALG) the chain is on the extracellular side. Residues 432 to 446 (TGTGILLTVGILYRF) form a helical membrane-spanning segment. Residues 447–468 (YEEIAREQITEMFPALRRLFKG) are Cytoplasmic-facing.

The protein belongs to the SecY/SEC61-alpha family. Component of the Sec protein translocase complex. Heterotrimer consisting of alpha (SecY), beta (SecG) and gamma (SecE) subunits. The heterotrimers can form oligomers, although 1 heterotrimer is thought to be able to translocate proteins. Interacts with the ribosome. May interact with SecDF, and other proteins may be involved.

Its subcellular location is the cell membrane. Its function is as follows. The central subunit of the protein translocation channel SecYEG. Consists of two halves formed by TMs 1-5 and 6-10. These two domains form a lateral gate at the front which open onto the bilayer between TMs 2 and 7, and are clamped together by SecE at the back. The channel is closed by both a pore ring composed of hydrophobic SecY resides and a short helix (helix 2A) on the extracellular side of the membrane which forms a plug. The plug probably moves laterally to allow the channel to open. The ring and the pore may move independently. This Pyrococcus horikoshii (strain ATCC 700860 / DSM 12428 / JCM 9974 / NBRC 100139 / OT-3) protein is Protein translocase subunit SecY.